The following is a 287-amino-acid chain: Ret finger protein-like 4A (287 aa).

Residues 11–53 (CYFCFRCLESPVYLNCGYICCLKCLDSLEKSPEGDGVLCPTCS) form an RING-type; degenerate zinc finger. In terms of domain architecture, B30.2/SPRY spans 78-278 (EPQLNFILTM…LSICPVTNPG (201 aa)).

Interacts with PSMB1, UBE2A and CCNB1. As to expression, expressed in the ovaries and oocytes (at protein level). Expression restricted to gonads. In testis, present at later stages of spermatogeneis and abundant in elongating spermatids.

It is found in the cytoplasm. The protein resides in the nucleus. This is Ret finger protein-like 4A (Rfpl4a) from Mus musculus (Mouse).